The following is a 370-amino-acid chain: Anhydro-N-acetylmuramic acid kinase (370 aa).

13–20 (GTSMDGVD) provides a ligand contact to ATP.

It belongs to the anhydro-N-acetylmuramic acid kinase family.

The enzyme catalyses 1,6-anhydro-N-acetyl-beta-muramate + ATP + H2O = N-acetyl-D-muramate 6-phosphate + ADP + H(+). It functions in the pathway amino-sugar metabolism; 1,6-anhydro-N-acetylmuramate degradation. The protein operates within cell wall biogenesis; peptidoglycan recycling. Functionally, catalyzes the specific phosphorylation of 1,6-anhydro-N-acetylmuramic acid (anhMurNAc) with the simultaneous cleavage of the 1,6-anhydro ring, generating MurNAc-6-P. Is required for the utilization of anhMurNAc either imported from the medium or derived from its own cell wall murein, and thus plays a role in cell wall recycling. The protein is Anhydro-N-acetylmuramic acid kinase of Shewanella denitrificans (strain OS217 / ATCC BAA-1090 / DSM 15013).